The primary structure comprises 104 residues: Phycoerythrin alpha-2 chain, chloroplastic (104 aa).

The N-terminal 37 residues, 1 to 37 (MSAKIIAFSAVVATASAFAPTAGFVPRLRSGATSVNM), are a transit peptide targeting the chloroplast. Lys41 bears the 5-hydroxylysine mark. 15,16-dihydrobiliverdin contacts are provided by Cys56 and Arg58. Residues 61–63 (KEY) form a 15,16-dihydrobiliverdin chromophore region. Lys78 contributes to the 15,16-dihydrobiliverdin binding site.

Belongs to the phycoerythrin family. In terms of assembly, heterotetramer of 2 different alpha chains and 2 identical beta chains. The subunit composition could comprise of any combination of 2 out of 4 different alpha units with an invariant beta unit. Post-translationally, contains one covalently linked 15,16-dihydrobiliverdin chromophore.

It is found in the plastid. The protein localises to the chloroplast thylakoid membrane. Functionally, light-harvesting photosynthetic tetrapyrrole chromophore-protein from the phycobiliprotein complex. In Rhodomonas sp. (strain CS 24) (Chroomonas sp. (strain CS24)), this protein is Phycoerythrin alpha-2 chain, chloroplastic (cpeA2).